Reading from the N-terminus, the 187-residue chain is NADPH-dependent 3-demethoxyubiquinone 3-hydroxylase, mitochondrial (187 aa).

The N-terminal 8 residues, 1 to 8 (MFRVITRG), are a transit peptide targeting the mitochondrion. Position 21 (lysine 21) interacts with NADH. Tandem repeats lie at residues 28–99 (AGEL…SALL) and 100–187 (GKEG…AEKI). The interval 28-187 (AGELGADRIY…KGAIAIAEKI (160 aa)) is 2 X approximate tandem repeats. Fe cation-binding residues include glutamate 30, glutamate 60, histidine 63, glutamate 112, glutamate 148, and histidine 151. NADH is bound at residue lysine 186.

Belongs to the COQ7 family. As to quaternary structure, component of a multi-subunit COQ enzyme complex. Fe cation is required as a cofactor.

Its subcellular location is the mitochondrion inner membrane. The protein localises to the mitochondrion. It is found in the nucleus. It catalyses the reaction a 5-methoxy-2-methyl-3-(all-trans-polyprenyl)benzoquinone + NADH + O2 = a 3-demethylubiquinone + NAD(+) + H2O. The protein operates within cofactor biosynthesis; ubiquinone biosynthesis. Functionally, catalyzes the hydroxylation of the 5-methoxy-2-methyl-3-(all-trans-polyprenyl)benzoquinone at the C6 position and participates in the biosynthesis of ubiquinone. Catalyzes the reaction through a substrate-mediated reduction pathway, whereby NADH shuttles electrons to 5-methoxy-2-methyl-3-(all-trans-decaprenyl)benzoquinone, which then transfers the electrons to the two Fe(3+) centers. The binding of 5-methoxy-2-methyl-3-(all-trans-polyprenyl)benzoquinone (DMQn) mediates reduction of the diiron center by nicotinamide adenine dinucleotide (NADH) and initiates oxygen activation for subsequent DMQ hydroxylation. Also has a structural role in the COQ enzyme complex, stabilizing other COQ polypeptides. Involved in lifespan determination in a ubiquinone-independent manner. Plays a role in modulating mitochondrial stress responses, acting in the nucleus, perhaps via regulating gene expression, independent of its characterized mitochondrial function in ubiquinone biosynthesis. Plays a role in modulating polyribosome formation. This Caenorhabditis elegans protein is NADPH-dependent 3-demethoxyubiquinone 3-hydroxylase, mitochondrial.